A 227-amino-acid polypeptide reads, in one-letter code: Ribonuclease 3 (227 aa).

Residues Tyr-5–Gly-127 form the RNase III domain. Residue Glu-40 coordinates Mg(2+). Asp-44 is an active-site residue. Residues Asp-113 and Glu-116 each contribute to the Mg(2+) site. Glu-116 is an active-site residue. A DRBM domain is found at Asp-154–Lys-224.

The protein belongs to the ribonuclease III family. As to quaternary structure, homodimer. The cofactor is Mg(2+).

The protein resides in the cytoplasm. The catalysed reaction is Endonucleolytic cleavage to 5'-phosphomonoester.. In terms of biological role, digests double-stranded RNA. Involved in the processing of primary rRNA transcript to yield the immediate precursors to the large and small rRNAs (23S and 16S). Processes some mRNAs, and tRNAs when they are encoded in the rRNA operon. Processes pre-crRNA and tracrRNA of type II CRISPR loci if present in the organism. This chain is Ribonuclease 3, found in Marinomonas sp. (strain MWYL1).